An 899-amino-acid polypeptide reads, in one-letter code: Protein suppressor of hairy wing (899 aa).

Disordered stretches follow at residues 1-33 (MSAQEDALPATPPASSSIKISDGDKPKEKRTGT), 45-127 (AAVA…KKMD), and 171-206 (AKENGEEFVVSGVDEDDDDDDDDEDEGVVEGGAKRR). The segment covering 21-31 (SDGDKPKEKRT) has biased composition (basic and acidic residues). A compositionally biased stretch (low complexity) spans 45 to 55 (AAVASKGASVS). Polar residues-rich tracts occupy residues 67–83 (KILNNNNNDEAQTSTKG) and 102–111 (RSSAPASSAV). Over residues 183–198 (VDEDDDDDDDDEDEGV) the composition is skewed to acidic residues. The C2H2-type 1; atypical zinc-finger motif lies at 218–240 (HVCGKCYKTFRRVKSLKKHLEFC). The C2H2-type 2 zinc finger occupies 288-311 (INCPDCPKSFKTQTSYERHIFITH). Residues 318 to 340 (YPCSICNAKLRSGALLKLHEQQH) form a C2H2-type 3; atypical zinc finger. C2H2-type zinc fingers lie at residues 347 to 365 (FACKICGKDFMCSYHLKCH), 379 to 401 (MSCKVCDRVFYRLDNLCAHLKQH), 412 to 434 (YMCHVCKNCFYSLSTLNIHIRTH), 440 to 462 (FDCDLCDKKFSALVALKKHRRYH), 468 to 490 (YTCTVCSQSFAVKEVLNRHMKRH), 496 to 518 (HKCNECGKSFIQATQLRTHSKTH), 522 to 544 (YACSLCIQKFKTEKQLERHVKDH), 552 to 576 (FACTECTRSFRTSALLKEHLDAGDH), and 594 to 617 (TDCAICDKNFDTTETLRNHIRSVH). Disordered regions lie at residues 646–665 (EQKEQEDDVPARNTSAGSLI), 702–734 (PLEGDKATESTAETDIKAESSKEKPSVSPVVKK), and 865–899 (GDEDQDQDQETDKGKDREADNTDTDTREDAVESEA). Residues 874 to 899 (ETDKGKDREADNTDTDTREDAVESEA) are compositionally biased toward basic and acidic residues.

The protein localises to the nucleus. Component of the gypsy chromatin insulator complex which is required for the function of the gypsy chromatin insulator and other endogenous chromatin insulators. Chromatin insulators are regulatory elements which establish independent domains of transcriptional activity within eukaryotic genomes. Insulators have two defining properties; they can block the communication between an enhancer and a promoter when placed between them and can also buffer transgenes from position effect variegation (PEV). Insulators are proposed to structure the chromatin fiber into independent domains of differing transcriptional potential by promoting the formation of distinct chromatin loops. This chromatin looping may involve the formation of insulator bodies, where homotypic interactions between individual subunits of the insulator complex could promote the clustering of widely spaced insulators at the nuclear periphery. Within the gypsy insulator complex, this protein binds specifically to a region of the gypsy element located 3' of the 5' long terminal repeat (LTR), and may also mediate interaction with other endogenous insulators at sites distinct from those recognized by Cp190. Cooperates with pita and cliff to recruit Cp190 and regulate insulator function at the front-ultraabdominal (Fub) boundary. The polypeptide is Protein suppressor of hairy wing (su(Hw)) (Drosophila virilis (Fruit fly)).